Reading from the N-terminus, the 200-residue chain is Protein-methionine-sulfoxide reductase heme-binding subunit MsrQ (200 aa).

A run of 5 helical transmembrane segments spans residues 8 to 28 (ITWL…WLFY), 54 to 74 (LLLA…PLLI), 79 to 99 (LLGL…SLLE), 116 to 136 (PYLT…LTSF), and 153 to 173 (FIYL…KILS).

Belongs to the MsrQ family. Heterodimer of a catalytic subunit (MsrP) and a heme-binding subunit (MsrQ). FMN serves as cofactor. It depends on heme b as a cofactor.

The protein localises to the cell inner membrane. Part of the MsrPQ system that repairs oxidized periplasmic proteins containing methionine sulfoxide residues (Met-O), using respiratory chain electrons. Thus protects these proteins from oxidative-stress damage caused by reactive species of oxygen and chlorine generated by the host defense mechanisms. MsrPQ is essential for the maintenance of envelope integrity under bleach stress, rescuing a wide series of structurally unrelated periplasmic proteins from methionine oxidation. MsrQ provides electrons for reduction to the reductase catalytic subunit MsrP, using the quinone pool of the respiratory chain. The sequence is that of Protein-methionine-sulfoxide reductase heme-binding subunit MsrQ from Cronobacter sakazakii (strain ATCC BAA-894) (Enterobacter sakazakii).